The following is a 201-amino-acid chain: IMP cyclohydrolase (201 aa).

This sequence belongs to the archaeal IMP cyclohydrolase family.

It carries out the reaction IMP + H2O = 5-formamido-1-(5-phospho-D-ribosyl)imidazole-4-carboxamide. Its pathway is purine metabolism; IMP biosynthesis via de novo pathway; IMP from 5-formamido-1-(5-phospho-D-ribosyl)imidazole-4-carboxamide: step 1/1. Catalyzes the cyclization of 5-formylamidoimidazole-4-carboxamide ribonucleotide to IMP. The protein is IMP cyclohydrolase of Methanococcus maripaludis (strain C7 / ATCC BAA-1331).